We begin with the raw amino-acid sequence, 680 residues long: DNA ligase (680 aa).

NAD(+)-binding positions include 38–42 (DAEYD), 87–88 (SL), and glutamate 119. Residue lysine 121 is the N6-AMP-lysine intermediate of the active site. The NAD(+) site is built by arginine 142, glutamate 179, lysine 296, and lysine 320. The Zn(2+) site is built by cysteine 414, cysteine 417, cysteine 432, and cysteine 438. A BRCT domain is found at 597–680 (IEDLPLKGLT…DLLRKHGRLE (84 aa)).

It belongs to the NAD-dependent DNA ligase family. LigA subfamily. Mg(2+) is required as a cofactor. It depends on Mn(2+) as a cofactor.

The enzyme catalyses NAD(+) + (deoxyribonucleotide)n-3'-hydroxyl + 5'-phospho-(deoxyribonucleotide)m = (deoxyribonucleotide)n+m + AMP + beta-nicotinamide D-nucleotide.. DNA ligase that catalyzes the formation of phosphodiester linkages between 5'-phosphoryl and 3'-hydroxyl groups in double-stranded DNA using NAD as a coenzyme and as the energy source for the reaction. It is essential for DNA replication and repair of damaged DNA. The sequence is that of DNA ligase from Cellvibrio japonicus (strain Ueda107) (Pseudomonas fluorescens subsp. cellulosa).